The sequence spans 551 residues: HTH-type transcriptional regulator SgrR (551 aa).

Residues 1–116 (MPSARLQQQF…LVSHLGRSFR (116 aa)) enclose the HTH marR-type domain. The segment at residues 26–49 (LNELAALLSCSRRHMRTLLNTMQD) is a DNA-binding region (H-T-H motif). Residues 163–492 (ELEADIAHHW…IDWQADAARW (330 aa)) are solute-binding.

Activates the small RNA gene sgrS under glucose-phosphate stress conditions as well as yfdZ. Represses its own transcription under both stress and non-stress conditions. Might act as a sensor of the intracellular accumulation of phosphoglucose by binding these molecules in its C-terminal solute-binding domain. The protein is HTH-type transcriptional regulator SgrR of Shigella sonnei (strain Ss046).